The following is a 318-amino-acid chain: HPr kinase/phosphorylase (318 aa).

Catalysis depends on residues His146 and Lys167. 161-168 (GESGLGKS) contributes to the ATP binding site. Mg(2+) is bound at residue Ser168. Asp185 functions as the Proton acceptor; for phosphorylation activity. Proton donor; for dephosphorylation activity in the catalytic mechanism. The segment at 209–218 (LEVRGIGLLD) is important for the catalytic mechanism of both phosphorylation and dephosphorylation. Glu210 contacts Mg(2+). Residue Arg252 is part of the active site. The tract at residues 273 to 278 (QVVAGR) is important for the catalytic mechanism of dephosphorylation.

It belongs to the HPrK/P family. Homohexamer. Mg(2+) serves as cofactor.

The catalysed reaction is [HPr protein]-L-serine + ATP = [HPr protein]-O-phospho-L-serine + ADP + H(+). It carries out the reaction [HPr protein]-O-phospho-L-serine + phosphate + H(+) = [HPr protein]-L-serine + diphosphate. Functionally, catalyzes the ATP- as well as the pyrophosphate-dependent phosphorylation of a specific serine residue in HPr, a phosphocarrier protein of the phosphoenolpyruvate-dependent sugar phosphotransferase system (PTS). HprK/P also catalyzes the pyrophosphate-producing, inorganic phosphate-dependent dephosphorylation (phosphorolysis) of seryl-phosphorylated HPr (P-Ser-HPr). The protein is HPr kinase/phosphorylase of Verminephrobacter eiseniae (strain EF01-2).